A 480-amino-acid polypeptide reads, in one-letter code: ATP synthase subunit beta (480 aa).

158 to 165 (GGAGVGKT) is an ATP binding site.

This sequence belongs to the ATPase alpha/beta chains family. As to quaternary structure, F-type ATPases have 2 components, CF(1) - the catalytic core - and CF(0) - the membrane proton channel. CF(1) has five subunits: alpha(3), beta(3), gamma(1), delta(1), epsilon(1). CF(0) has three main subunits: a(1), b(2) and c(9-12). The alpha and beta chains form an alternating ring which encloses part of the gamma chain. CF(1) is attached to CF(0) by a central stalk formed by the gamma and epsilon chains, while a peripheral stalk is formed by the delta and b chains.

Its subcellular location is the cell inner membrane. It carries out the reaction ATP + H2O + 4 H(+)(in) = ADP + phosphate + 5 H(+)(out). Produces ATP from ADP in the presence of a proton gradient across the membrane. The catalytic sites are hosted primarily by the beta subunits. The polypeptide is ATP synthase subunit beta (Acidobacterium capsulatum (strain ATCC 51196 / DSM 11244 / BCRC 80197 / JCM 7670 / NBRC 15755 / NCIMB 13165 / 161)).